Here is a 51-residue protein sequence, read N- to C-terminus: Sperm protamine P1 (51 aa).

Belongs to the protamine P1 family. Testis.

It is found in the nucleus. Its subcellular location is the chromosome. In terms of biological role, protamines substitute for histones in the chromatin of sperm during the haploid phase of spermatogenesis. They compact sperm DNA into a highly condensed, stable and inactive complex. This Trachypithecus francoisi (Francois' leaf monkey) protein is Sperm protamine P1 (PRM1).